Reading from the N-terminus, the 97-residue chain is Large ribosomal subunit protein uL23 (97 aa).

Belongs to the universal ribosomal protein uL23 family. In terms of assembly, part of the 50S ribosomal subunit. Contacts protein L29, and trigger factor when it is bound to the ribosome.

One of the early assembly proteins it binds 23S rRNA. One of the proteins that surrounds the polypeptide exit tunnel on the outside of the ribosome. Forms the main docking site for trigger factor binding to the ribosome. In Limosilactobacillus fermentum (strain NBRC 3956 / LMG 18251) (Lactobacillus fermentum), this protein is Large ribosomal subunit protein uL23.